The following is a 314-amino-acid chain: Acetyl-coenzyme A carboxylase carboxyl transferase subunit alpha (314 aa).

Residues glutamate 32–glutamate 289 enclose the CoA carboxyltransferase C-terminal domain.

It belongs to the AccA family. Acetyl-CoA carboxylase is a heterohexamer composed of biotin carboxyl carrier protein (AccB), biotin carboxylase (AccC) and two subunits each of ACCase subunit alpha (AccA) and ACCase subunit beta (AccD).

Its subcellular location is the cytoplasm. It carries out the reaction N(6)-carboxybiotinyl-L-lysyl-[protein] + acetyl-CoA = N(6)-biotinyl-L-lysyl-[protein] + malonyl-CoA. It participates in lipid metabolism; malonyl-CoA biosynthesis; malonyl-CoA from acetyl-CoA: step 1/1. Its function is as follows. Component of the acetyl coenzyme A carboxylase (ACC) complex. First, biotin carboxylase catalyzes the carboxylation of biotin on its carrier protein (BCCP) and then the CO(2) group is transferred by the carboxyltransferase to acetyl-CoA to form malonyl-CoA. The chain is Acetyl-coenzyme A carboxylase carboxyl transferase subunit alpha from Staphylococcus epidermidis (strain ATCC 35984 / DSM 28319 / BCRC 17069 / CCUG 31568 / BM 3577 / RP62A).